A 227-amino-acid polypeptide reads, in one-letter code: Cytidylate kinase (227 aa).

Gly10–Thr18 contacts ATP.

It belongs to the cytidylate kinase family. Type 1 subfamily.

Its subcellular location is the cytoplasm. It carries out the reaction CMP + ATP = CDP + ADP. The catalysed reaction is dCMP + ATP = dCDP + ADP. The sequence is that of Cytidylate kinase from Streptococcus mutans serotype c (strain ATCC 700610 / UA159).